The chain runs to 614 residues: Type VII secretion system protein EssD (614 aa).

The segment at 417–445 (QNHVTHGPKDSMVRSEGKHSISSHEMNSS) is disordered. Basic and acidic residues predominate over residues 423-435 (GPKDSMVRSEGKH).

This sequence belongs to the EssD family. As to quaternary structure, interacts (via C-terminal) with EssG; this interaction blocks EssD activity. Interacts with EssE.

It localises to the secreted. The protein resides in the cell membrane. In terms of biological role, component of the type VII secretion system (Ess). Plays a role in Ess secretion during infection. Required for the efficient secretion of EsxA. Required for abscess formation and staphylococcal persistence in host tissues. Possesses a toxic DNase activity that is modulated by EsaG by forming a nuclease toxin-antitoxin pair. This nuclease toxin targets competitor bacteria. The protein is Type VII secretion system protein EssD of Staphylococcus aureus (strain USA300).